A 145-amino-acid polypeptide reads, in one-letter code: Small ribosomal subunit protein uS19 (145 aa).

An N-acetylalanine modification is found at Ala-2. Lys-108 participates in a covalent cross-link: Glycyl lysine isopeptide (Lys-Gly) (interchain with G-Cter in SUMO2).

The protein belongs to the universal ribosomal protein uS19 family. Component of the small ribosomal subunit.

It localises to the cytoplasm. In terms of biological role, component of the small ribosomal subunit. The ribosome is a large ribonucleoprotein complex responsible for the synthesis of proteins in the cell. In Oryctolagus cuniculus (Rabbit), this protein is Small ribosomal subunit protein uS19 (RPS15).